The sequence spans 467 residues: FGNMFDLAGSAPYKKIACLKEKYGPILWLKIGSSMNTMVIQTANSASELFRNHDVSFSDRPIVDVNLAHNYYKGSMALAPYGNYWRFSRRICTVEMFVHKRINETTNIRQESVDKMLRLDEEKASSSGGGGEGIEVTRYMFLASFNMVGNMIFSKDLVTDPESKQGSEFFNAMIGIMEWAGVPNISDIFPCLKMFDVQGLRKKMERDMGKGKEITKKFIEERIEERKKGEKNRSIKDLLDVLIDFEGSGKDEPDKLSEDEITVIILEMFLAGTETTSSSVEWALTELLRHPQAMAKVKLEILQVIGPNKKFEECDIDSLPYMQAVLKEQLRLHPPLPLLIPRKAIQDTKFMGYDIPKGTQVLVNAWAIGRDPEYWDNPFEFKPERFLESKVDVKGQNYELIPFGAGRRMCVGLPLGHRMMHFTFGSLLHEFDWELPHNVSPKSINMEESMGITARKKQPLKVIPKKA.

Cys-410 serves as a coordination point for heme.

The protein belongs to the cytochrome P450 family. Heme serves as cofactor.

This is Cytochrome P450 76A1 (CYP76A1) from Solanum melongena (Eggplant).